The chain runs to 1368 residues: Alpha-latrotoxin-Lg1a (1368 aa).

The helix H8 is the probable transmembrane region of the tetrameric pore inserted in the target cell membrane stretch occupies residues V217 to L236. A disulfide bridge connects residues C392 and C1044. 20 ANK repeats span residues Q469–Q500, K504–S533, F538–E568, D572–V601, K605–A635, N639–A669, G674–L704, G708–Q737, E741–A770, T774–E803, N807–I837, N841–T870, K874–I903, D907–W936, I953–S981, I982–G1011, K1013–H1042, N1046–R1075, L1079–I1109, and N1115–I1144. The furin-like endopeptidase recognition region stretch occupies residues K1174–R1177. Positions E1178 to S1368 are excised as a propeptide.

It belongs to the cationic peptide 01 (latrotoxin) family. 03 (alpha-latrotoxin) subfamily. Homotetramer in membranes. In terms of tissue distribution, expressed in venom gland, cephalothorax, and abdomen tissues from both males and females.

The protein resides in the secreted. It is found in the target cell membrane. Its function is as follows. Presynaptic neurotoxin that causes massive release of neurotransmitters from vertebrate (but not invertebrate) nerve terminals and endocrine cells via a complex mechanism involving activation of receptor(s) and toxin insertion into the plasma membrane with subsequent pore formation. Binds to neurexin-1-alpha (NRXN1) in a calcium dependent manner, adhesion G protein-coupled receptor L1 (ADGRL1, also termed latrophilin-1 and calcium-independent receptor of latrotoxin (CIRL)), and receptor-type tyrosine-protein phosphatase S (PTPRS), also termed PTP sigma. NRXN1 and PTPRS are suggested to provide a platform for binding and subsequent pore formation events. In contrast, binding to ADGRL1 does not involve oligomerization and channel formation, but direct downstream stimulation of the synaptic fusion machinery. The chain is Alpha-latrotoxin-Lg1a from Latrodectus geometricus (Brown widow spider).